The following is a 247-amino-acid chain: Carboxy-S-adenosyl-L-methionine synthase (247 aa).

S-adenosyl-L-methionine contacts are provided by residues Tyr39, 64 to 66 (GCS), 89 to 90 (DN), 117 to 118 (DI), Asn132, and Arg199.

It belongs to the class I-like SAM-binding methyltransferase superfamily. Cx-SAM synthase family. As to quaternary structure, homodimer.

It carries out the reaction prephenate + S-adenosyl-L-methionine = carboxy-S-adenosyl-L-methionine + 3-phenylpyruvate + H2O. In terms of biological role, catalyzes the conversion of S-adenosyl-L-methionine (SAM) to carboxy-S-adenosyl-L-methionine (Cx-SAM). The protein is Carboxy-S-adenosyl-L-methionine synthase of Salmonella arizonae (strain ATCC BAA-731 / CDC346-86 / RSK2980).